The following is a 261-amino-acid chain: MGRVIRAQRKGEGSVFTAHTKKRKGEPKLRALDYAERHGYLKGTVKQIIHDPGRGAPLAVVHFRDPYKFNVRKQLFIAAEGMYTGQFVYCGKRAQLQIGNVLPIGLMPEGTIVCNLEEKTGDRGKLARTSGNYASVIAHNPDTKRTRVKLPSGAKKVLPSANRAMVGIVAGGGRIDKPILKAGRAYRKYKVKRNCWPKVRGVAMNPVEHPHGGGNHQHIGKASTVKRGTPPGRKVGLIAARRTGRIRGGKGDEKFKEKEKK.

The segment at 207-233 (VEHPHGGGNHQHIGKASTVKRGTPPGR) is disordered.

It belongs to the universal ribosomal protein uL2 family.

It is found in the cytoplasm. The polypeptide is Large ribosomal subunit protein uL2 (RpL8) (Aedes albopictus (Asian tiger mosquito)).